Reading from the N-terminus, the 252-residue chain is Imidazole glycerol phosphate synthase subunit HisF (252 aa).

Catalysis depends on residues Asp11 and Asp130.

Belongs to the HisA/HisF family. As to quaternary structure, heterodimer of HisH and HisF.

It localises to the cytoplasm. The catalysed reaction is 5-[(5-phospho-1-deoxy-D-ribulos-1-ylimino)methylamino]-1-(5-phospho-beta-D-ribosyl)imidazole-4-carboxamide + L-glutamine = D-erythro-1-(imidazol-4-yl)glycerol 3-phosphate + 5-amino-1-(5-phospho-beta-D-ribosyl)imidazole-4-carboxamide + L-glutamate + H(+). Its pathway is amino-acid biosynthesis; L-histidine biosynthesis; L-histidine from 5-phospho-alpha-D-ribose 1-diphosphate: step 5/9. IGPS catalyzes the conversion of PRFAR and glutamine to IGP, AICAR and glutamate. The HisF subunit catalyzes the cyclization activity that produces IGP and AICAR from PRFAR using the ammonia provided by the HisH subunit. The protein is Imidazole glycerol phosphate synthase subunit HisF of Staphylococcus epidermidis (strain ATCC 35984 / DSM 28319 / BCRC 17069 / CCUG 31568 / BM 3577 / RP62A).